We begin with the raw amino-acid sequence, 145 residues long: Oleosin L (145 aa).

Position 2 is an N-acetylalanine (alanine 2). 2 helical membrane-spanning segments follow: residues 36–56 and 59–79; these read GSLLVLSGLTLAGTVIALTIA and LLVIFSPVLVPAVITIFLLGA. Positions 58–69 match the Proline-knot motif; the sequence is PLLVIFSPVLVP. Residues 123–132 show a composition bias toward basic and acidic residues; sequence KAREMKDRAE. The tract at residues 123 to 145 is disordered; sequence KAREMKDRAEQFSQQPVAGSQTS. Positions 133-145 are enriched in polar residues; the sequence is QFSQQPVAGSQTS.

The protein belongs to the oleosin family. In terms of tissue distribution, expressed in seeds (at protein level).

The protein localises to the lipid droplet. Its subcellular location is the membrane. Functionally, may have a structural role to stabilize the lipid body during desiccation of the seed by preventing coalescence of the oil. Probably interacts with both lipid and phospholipid moieties of lipid bodies. May also provide recognition signals for specific lipase anchorage in lipolysis during seedling growth. The protein is Oleosin L of Sesamum indicum (Oriental sesame).